Consider the following 164-residue polypeptide: Peroxynitrite isomerase 2 (164 aa).

The GXWXGXG motif lies at 17–23; sequence GSWAGRG. His-155 is a binding site for heme b.

The protein belongs to the nitrobindin family. Homodimer. Heme b serves as cofactor.

It carries out the reaction peroxynitrite = nitrate. Its pathway is nitrogen metabolism. In terms of biological role, heme-binding protein able to scavenge peroxynitrite and to protect free L-tyrosine against peroxynitrite-mediated nitration, by acting as a peroxynitrite isomerase that converts peroxynitrite to nitrate. Therefore, this protein likely plays a role in peroxynitrite sensing and in the detoxification of reactive nitrogen and oxygen species (RNS and ROS, respectively). Is able to bind nitric oxide (NO) in vitro, but may act as a sensor of peroxynitrite levels in vivo. This Mycobacterium bovis (strain BCG / Pasteur 1173P2) protein is Peroxynitrite isomerase 2.